The chain runs to 194 residues: Thymidylate kinase (194 aa).

An ATP-binding site is contributed by 7 to 14 (GVDCVGKS).

The protein belongs to the thymidylate kinase family.

It carries out the reaction dTMP + ATP = dTDP + ADP. Its function is as follows. Phosphorylation of dTMP to form dTDP in both de novo and salvage pathways of dTTP synthesis. The chain is Thymidylate kinase from Campylobacter lari (strain RM2100 / D67 / ATCC BAA-1060).